Reading from the N-terminus, the 386-residue chain is Chaperone protein DnaJ (386 aa).

The region spanning 5–70 is the J domain; that stretch reads DYYEVLGVER…QKRAAYDRYG (66 aa). A CR-type zinc finger spans residues 138-216; sequence GKDETIHVPQ…CGGHGQVKEE (79 aa). Zn(2+) contacts are provided by cysteine 151, cysteine 154, cysteine 168, cysteine 171, cysteine 190, cysteine 193, cysteine 204, and cysteine 207. CXXCXGXG motif repeat units lie at residues 151 to 158, 168 to 175, 190 to 197, and 204 to 211; these read CRPCEGTG, CETCGGHG, CHICQGRG, and CKTCGGHG.

Belongs to the DnaJ family. In terms of assembly, homodimer. Zn(2+) serves as cofactor.

The protein localises to the cytoplasm. Participates actively in the response to hyperosmotic and heat shock by preventing the aggregation of stress-denatured proteins and by disaggregating proteins, also in an autonomous, DnaK-independent fashion. Unfolded proteins bind initially to DnaJ; upon interaction with the DnaJ-bound protein, DnaK hydrolyzes its bound ATP, resulting in the formation of a stable complex. GrpE releases ADP from DnaK; ATP binding to DnaK triggers the release of the substrate protein, thus completing the reaction cycle. Several rounds of ATP-dependent interactions between DnaJ, DnaK and GrpE are required for fully efficient folding. Also involved, together with DnaK and GrpE, in the DNA replication of plasmids through activation of initiation proteins. This Hyphomonas neptunium (strain ATCC 15444) protein is Chaperone protein DnaJ.